Here is a 146-residue protein sequence, read N- to C-terminus: Large ribosomal subunit protein uL15 (146 aa).

The tract at residues 1 to 56 is disordered; that stretch reads MGLRLNELSPGVGAKKTAQRRGRGIGSGLGKTGGRGVKGQKSRSGSSVRSGFEGGQ. Gly residues predominate over residues 24–37; it reads GIGSGLGKTGGRGV.

This sequence belongs to the universal ribosomal protein uL15 family. In terms of assembly, part of the 50S ribosomal subunit.

Binds to the 23S rRNA. The protein is Large ribosomal subunit protein uL15 of Psychrobacter arcticus (strain DSM 17307 / VKM B-2377 / 273-4).